We begin with the raw amino-acid sequence, 213 residues long: ATP-dependent Clp protease proteolytic subunit 3 (213 aa).

Catalysis depends on serine 107, which acts as the Nucleophile. Histidine 132 is an active-site residue.

The protein belongs to the peptidase S14 family. As to quaternary structure, fourteen ClpP subunits assemble into 2 heptameric rings which stack back to back to give a disk-like structure with a central cavity, resembling the structure of eukaryotic proteasomes.

The protein localises to the cytoplasm. It catalyses the reaction Hydrolysis of proteins to small peptides in the presence of ATP and magnesium. alpha-casein is the usual test substrate. In the absence of ATP, only oligopeptides shorter than five residues are hydrolyzed (such as succinyl-Leu-Tyr-|-NHMec, and Leu-Tyr-Leu-|-Tyr-Trp, in which cleavage of the -Tyr-|-Leu- and -Tyr-|-Trp bonds also occurs).. Its function is as follows. Cleaves peptides in various proteins in a process that requires ATP hydrolysis. Has a chymotrypsin-like activity. Plays a major role in the degradation of misfolded proteins. This is ATP-dependent Clp protease proteolytic subunit 3 from Frankia casuarinae (strain DSM 45818 / CECT 9043 / HFP020203 / CcI3).